Here is a 490-residue protein sequence, read N- to C-terminus: MSQSVSERTRIKSDRYESGVIPYAKMGYWDAAYTVKDTDVLALFRITPQPGVDPVEAAAAVAGESSTATWTVVWTDLLTACERYRAKAYRVDPVPSATDQYFAFIAYECDLFEEASLSNLTASIIGNVFGFKAISALRLEDMRIPHSYLKTFQGPATGIVVERERLNKYGTPLLGATVKPKLGLSGKNYGRVVYEGLKGGLDFLKDDENINSQPFMRWRERFLNCLEGINRASAATGEVKGSYLNITAATMEEVYKRAEYAKMIGSVIVMIDLVMGYTAIQSIAYWARENDMLLHLHRAGNSTYARQKNHGINFRVICKWMRMSGVDHIHAGTVVGKLEGDPLMIKGFYDILRLTELEVNLPFGIFFEMDWASLRRCMPVASGGIHCGQMHQLIHYLGDDVVLQFGGGTIGHPDGIQAGATANRVALEAMVLARNEGLDYFNQQVGPQILRDAAKTCGPLQTALDLWKDISFNYTSTDTADFAETATANR.

The substrate site is built by N127 and T177. Catalysis depends on K179, which acts as the Proton acceptor. Residue K181 coordinates substrate. Mg(2+) is bound by residues K205, D207, and E208. K205 bears the N6-carboxylysine mark. The active-site Proton acceptor is H297. The substrate site is built by R298, H330, and S382.

Belongs to the RuBisCO large chain family. Type I subfamily. As to quaternary structure, heterohexadecamer of 8 large chains and 8 small chains. It depends on Mg(2+) as a cofactor.

It is found in the plastid. The protein localises to the chloroplast. The enzyme catalyses 2 (2R)-3-phosphoglycerate + 2 H(+) = D-ribulose 1,5-bisphosphate + CO2 + H2O. It catalyses the reaction D-ribulose 1,5-bisphosphate + O2 = 2-phosphoglycolate + (2R)-3-phosphoglycerate + 2 H(+). Its function is as follows. RuBisCO catalyzes two reactions: the carboxylation of D-ribulose 1,5-bisphosphate, the primary event in carbon dioxide fixation, as well as the oxidative fragmentation of the pentose substrate in the photorespiration process. Both reactions occur simultaneously and in competition at the same active site. The sequence is that of Ribulose bisphosphate carboxylase large chain from Thalassiosira pseudonana (Marine diatom).